We begin with the raw amino-acid sequence, 513 residues long: V-type proton ATPase subunit B, kidney isoform (513 aa).

Residues 1 to 18 (MATTVDSRSSGFTGNSCD) show a composition bias toward polar residues. A disordered region spans residues 1-21 (MATTVDSRSSGFTGNSCDPGT). ATP is bound at residue arginine 394. Positions 510-513 (DTAL) match the PDZ-binding motif.

The protein belongs to the ATPase alpha/beta chains family. In terms of assembly, V-ATPase is a heteromultimeric enzyme made up of two complexes: the ATP-hydrolytic V1 complex and the proton translocation V0 complex. The V1 complex consists of three catalytic AB heterodimers that form a heterohexamer, three peripheral stalks each consisting of EG heterodimers, one central rotor including subunits D and F, and the regulatory subunits C and H. The proton translocation complex V0 consists of the proton transport subunit a, a ring of proteolipid subunits c9c'', rotary subunit d, subunits e and f, and the accessory subunits ATP6AP1/Ac45 and ATP6AP2/PRR. Forms a complex with NHERF1 and SCL4A7. Highly expressed in the kidney; found in early distal nephron, encompassing thick ascending limbs and distal convoluted tubules and in the alpha-intercalated cells of the cortical collecting ducts (at protein level). Expressed in the olfactory epithelium (at protein level). Expressed at lower levels in the testis.

Its subcellular location is the apical cell membrane. It is found in the basolateral cell membrane. In terms of biological role, non-catalytic subunit of the V1 complex of vacuolar(H+)-ATPase (V-ATPase), a multisubunit enzyme composed of a peripheral complex (V1) that hydrolyzes ATP and a membrane integral complex (V0) that translocates protons. V-ATPase is responsible for acidifying and maintaining the pH of intracellular compartments and in some cell types, is targeted to the plasma membrane, where it is responsible for acidifying the extracellular environment. Essential for the proper assembly and activity of V-ATPase. In renal intercalated cells, mediates secretion of protons (H+) into the urine thereby ensuring correct urinary acidification. Required for optimal olfactory function by mediating the acidification of the nasal olfactory epithelium. The protein is V-type proton ATPase subunit B, kidney isoform (Atp6v1b1) of Mus musculus (Mouse).